Consider the following 494-residue polypeptide: Glycerol kinase (494 aa).

Thr12 provides a ligand contact to ADP. ATP-binding residues include Thr12, Thr13, and Ser14. Thr12 contributes to the sn-glycerol 3-phosphate binding site. Arg16 provides a ligand contact to ADP. Residues Arg82, Glu83, Tyr134, and Asp243 each contribute to the sn-glycerol 3-phosphate site. The glycerol site is built by Arg82, Glu83, Tyr134, Asp243, and Gln244. Residues Thr265 and Gly308 each coordinate ADP. ATP contacts are provided by Thr265, Gly308, Gln312, and Gly408. The ADP site is built by Gly408 and Asn412.

This sequence belongs to the FGGY kinase family.

It carries out the reaction glycerol + ATP = sn-glycerol 3-phosphate + ADP + H(+). Its pathway is polyol metabolism; glycerol degradation via glycerol kinase pathway; sn-glycerol 3-phosphate from glycerol: step 1/1. With respect to regulation, inhibited by fructose 1,6-bisphosphate (FBP). Its function is as follows. Key enzyme in the regulation of glycerol uptake and metabolism. Catalyzes the phosphorylation of glycerol to yield sn-glycerol 3-phosphate. The polypeptide is Glycerol kinase (Marinomonas sp. (strain MWYL1)).